The following is a 142-amino-acid chain: Large ribosomal subunit protein mL42 (142 aa).

A mitochondrion-targeting transit peptide spans methionine 1–histidine 32.

This sequence belongs to the mitochondrion-specific ribosomal protein mL42 family. Component of the mitochondrial large ribosomal subunit (mt-LSU). Mature mammalian 55S mitochondrial ribosomes consist of a small (28S) and a large (39S) subunit. The 28S small subunit contains a 12S ribosomal RNA (12S mt-rRNA) and 30 different proteins. The 39S large subunit contains a 16S rRNA (16S mt-rRNA), a copy of mitochondrial valine transfer RNA (mt-tRNA(Val)), which plays an integral structural role, and 52 different proteins.

It localises to the mitochondrion. In Homo sapiens (Human), this protein is Large ribosomal subunit protein mL42 (MRPL42).